A 207-amino-acid chain; its full sequence is Segregation and condensation protein B (207 aa).

This sequence belongs to the ScpB family. As to quaternary structure, homodimer. Homodimerization may be required to stabilize the binding of ScpA to the Smc head domains. Component of a cohesin-like complex composed of ScpA, ScpB and the Smc homodimer, in which ScpA and ScpB bind to the head domain of Smc. The presence of the three proteins is required for the association of the complex with DNA.

It localises to the cytoplasm. Participates in chromosomal partition during cell division. May act via the formation of a condensin-like complex containing Smc and ScpA that pull DNA away from mid-cell into both cell halves. The chain is Segregation and condensation protein B from Mycoplasmopsis pulmonis (strain UAB CTIP) (Mycoplasma pulmonis).